The sequence spans 292 residues: Phosphatidylglycerol--prolipoprotein diacylglyceryl transferase (292 aa).

3 helical membrane-spanning segments follow: residues 18-38 (LFGV…GLLI), 67-87 (LLTW…VLFY), and 105-125 (GGMS…AFCL). Arg150 lines the a 1,2-diacyl-sn-glycero-3-phospho-(1'-sn-glycerol) pocket. 3 helical membrane-spanning segments follow: residues 193 to 213 (QIYE…LLVW), 222 to 242 (GSVS…VEFV), and 266 to 286 (GLTM…YLIL).

The protein belongs to the Lgt family.

The protein localises to the cell inner membrane. It carries out the reaction L-cysteinyl-[prolipoprotein] + a 1,2-diacyl-sn-glycero-3-phospho-(1'-sn-glycerol) = an S-1,2-diacyl-sn-glyceryl-L-cysteinyl-[prolipoprotein] + sn-glycerol 1-phosphate + H(+). Its pathway is protein modification; lipoprotein biosynthesis (diacylglyceryl transfer). Functionally, catalyzes the transfer of the diacylglyceryl group from phosphatidylglycerol to the sulfhydryl group of the N-terminal cysteine of a prolipoprotein, the first step in the formation of mature lipoproteins. This chain is Phosphatidylglycerol--prolipoprotein diacylglyceryl transferase, found in Cereibacter sphaeroides (strain ATCC 17023 / DSM 158 / JCM 6121 / CCUG 31486 / LMG 2827 / NBRC 12203 / NCIMB 8253 / ATH 2.4.1.) (Rhodobacter sphaeroides).